The primary structure comprises 177 residues: uncharacterized protein (177 aa).

This is an uncharacterized protein from Grapevine virus A (isolate Is 151) (GVA).